Reading from the N-terminus, the 360-residue chain is E3 ubiquitin-protein ligase HAKAI homolog (360 aa).

Over residues 1 to 11 (MLQIRLRRDSP) the composition is skewed to basic and acidic residues. The interval 1-24 (MLQIRLRRDSPTETGNGARPSPTE) is disordered. The RING-type zinc-finger motif lies at 72 to 107 (CVRCDFPIAIYGRLIPCDHAFCLECARSDSICYLCD). The C2H2-type zinc finger occupies 123–148 (FICAAPHCLRSFLKKLDFEAHVHDLH). Residues 156–360 (AEKEDGNQSD…QENRDGFGQE (205 aa)) are disordered. 3 stretches are compositionally biased toward polar residues: residues 163-179 (QSDVQSTMQQSSASEST), 186-214 (SQLQQSRELNRSASFAKSQSGFSQVQNYP), and 270-283 (YPTTESGSSQQFFN). The span at 293-304 (ESGGSEQSSLLG) shows a compositional bias: low complexity.

This sequence belongs to the Hakai family. In terms of assembly, interacts with MTB and VIR. Associates with MTA, MTB, FIP37 and VIR to form the m6A writer complex which is essential for adenosine methylation at specific mRNA sequences.

It is found in the nucleus speckle. Its subcellular location is the nucleus. The protein localises to the nucleoplasm. The enzyme catalyses S-ubiquitinyl-[E2 ubiquitin-conjugating enzyme]-L-cysteine + [acceptor protein]-L-lysine = [E2 ubiquitin-conjugating enzyme]-L-cysteine + N(6)-ubiquitinyl-[acceptor protein]-L-lysine.. Probable E3 ubiquitin-protein ligase which is a subunit of the N6-methyltransferase complex, a multiprotein complex that mediates N6-methyladenosine (m6A) methylation at the 5'-[AG]GAC-3' consensus sites of some mRNAs. Associates with MTA, MTB, FIP37 and VIR to form the m6A writer complex which is essential for adenosine methylation at specific mRNA sequences. N6-methyladenosine (m6A) plays a role in mRNA stability, processing, translation efficiency and editing. This Arabidopsis thaliana (Mouse-ear cress) protein is E3 ubiquitin-protein ligase HAKAI homolog.